Here is a 295-residue protein sequence, read N- to C-terminus: Sulfotransferase 1A3 (295 aa).

48-53 (KSGTTW) is a 3'-phosphoadenylyl sulfate binding site. Dopamine is bound by residues Asp86 and 106 to 108 (KSH). Catalysis depends on His108, which acts as the Proton acceptor. 3'-phosphoadenylyl sulfate contacts are provided by Arg130 and Ser138. Glu146 provides a ligand contact to dopamine. 3'-phosphoadenylyl sulfate contacts are provided by residues Tyr193, 227–232 (TSFKEM), and 257–259 (RKG).

It belongs to the sulfotransferase 1 family. As to quaternary structure, homodimer. Post-translationally, the N-terminus is blocked. Liver, colon, kidney, lung, brain, spleen, small intestine, placenta and leukocyte.

It localises to the cytoplasm. It carries out the reaction a phenol + 3'-phosphoadenylyl sulfate = an aryl sulfate + adenosine 3',5'-bisphosphate + H(+). The enzyme catalyses 4-nitrophenol + 3'-phosphoadenylyl sulfate = 4-nitrophenyl sulfate + adenosine 3',5'-bisphosphate. It catalyses the reaction dopamine + 3'-phosphoadenylyl sulfate = dopamine 3-O-sulfate + adenosine 3',5'-bisphosphate + H(+). The catalysed reaction is dopamine + 3'-phosphoadenylyl sulfate = dopamine 4-O-sulfate + adenosine 3',5'-bisphosphate + H(+). It carries out the reaction serotonin + 3'-phosphoadenylyl sulfate = serotonin O-sulfate + adenosine 3',5'-bisphosphate + H(+). The enzyme catalyses (R)-adrenaline + 3'-phosphoadenylyl sulfate = (R)-adrenaline 4'-O-sulfate + adenosine 3',5'-bisphosphate + H(+). It catalyses the reaction (R)-noradrenaline + 3'-phosphoadenylyl sulfate = (R)-noradrenaline 4'-O-sulfate + adenosine 3',5'-bisphosphate + H(+). The catalysed reaction is 3,3',5-triiodo-L-thyronine + 3'-phosphoadenylyl sulfate = 3,3',5-triiodo-L-thyronine sulfate + adenosine 3',5'-bisphosphate + H(+). It carries out the reaction 3,3',5'-triiodo-L-thyronine + 3'-phosphoadenylyl sulfate = 3,3',5'-triiodo-L-thyronine sulfate + adenosine 3',5'-bisphosphate + H(+). The enzyme catalyses 3,3'-diiodo-L-thyronine + 3'-phosphoadenylyl sulfate = 3,3'-diiodo-L-thyronine sulfate + adenosine 3',5'-bisphosphate + H(+). It catalyses the reaction L-thyroxine + 3'-phosphoadenylyl sulfate = L-thyroxine sulfate + adenosine 3',5'-bisphosphate + H(+). Its function is as follows. Sulfotransferase that utilizes 3'-phospho-5'-adenylyl sulfate (PAPS) as sulfonate donor to catalyze the sulfate conjugation of phenolic monoamines (neurotransmitters such as dopamine, (R)-adrenaline/epinephrine, (R)-noradrenaline/norepinephrine and serotonin) and phenolic and catechol drugs. Catalyzes the sulfation of T4 (L-thyroxine/3,5,3',5'-tetraiodothyronine), T3 (3,5,3'-triiodothyronine), rT3 (3,3',5'-triiodothyronine) and 3,3'-T2 (3,3'-diiodothyronine), with a substrate preference of 3,3'-T2 &gt; rT3 &gt; T3 &gt; T4. The protein is Sulfotransferase 1A3 (SULT1A3) of Homo sapiens (Human).